We begin with the raw amino-acid sequence, 460 residues long: tRNA modification GTPase MnmE (460 aa).

The (6S)-5-formyl-5,6,7,8-tetrahydrofolate site is built by R29, E91, and K132. The 157-residue stretch at 227–383 (GISIALIGKT…LIDTIIKKCG (157 aa)) folds into the TrmE-type G domain. N237 is a K(+) binding site. GTP-binding positions include 237–242 (NVGKSS), 256–262 (TNIPGTT), and 281–284 (DTAG). S241 provides a ligand contact to Mg(2+). K(+) is bound by residues T256, I258, and T261. T262 contacts Mg(2+). K460 is a binding site for (6S)-5-formyl-5,6,7,8-tetrahydrofolate.

This sequence belongs to the TRAFAC class TrmE-Era-EngA-EngB-Septin-like GTPase superfamily. TrmE GTPase family. Homodimer. Heterotetramer of two MnmE and two MnmG subunits. K(+) is required as a cofactor.

It is found in the cytoplasm. In terms of biological role, exhibits a very high intrinsic GTPase hydrolysis rate. Involved in the addition of a carboxymethylaminomethyl (cmnm) group at the wobble position (U34) of certain tRNAs, forming tRNA-cmnm(5)s(2)U34. This is tRNA modification GTPase MnmE from Prochlorococcus marinus (strain MIT 9312).